The sequence spans 308 residues: Maspardin (308 aa).

Positions 87–159 (FCDGFRKLLD…NSFWLMPAFM (73 aa)) constitute an AB hydrolase-1 domain. Serine 304 is subject to Phosphoserine.

Belongs to the AB hydrolase superfamily. In terms of assembly, interacts with CD4. Interacts with ALDH16A1. As to expression, expressed in cell lines FT.1 and in a L cell fibroblast derivative (at protein level).

It is found in the cytoplasm. May play a role as a negative regulatory factor in CD4-dependent T-cell activation. This is Maspardin (Spg21) from Mus musculus (Mouse).